We begin with the raw amino-acid sequence, 121 residues long: Large ribosomal subunit protein bL12 (121 aa).

It belongs to the bacterial ribosomal protein bL12 family. In terms of assembly, homodimer. Part of the ribosomal stalk of the 50S ribosomal subunit. Forms a multimeric L10(L12)X complex, where L10 forms an elongated spine to which 2 to 4 L12 dimers bind in a sequential fashion. Binds GTP-bound translation factors.

In terms of biological role, forms part of the ribosomal stalk which helps the ribosome interact with GTP-bound translation factors. Is thus essential for accurate translation. This is Large ribosomal subunit protein bL12 from Clostridioides difficile (strain 630) (Peptoclostridium difficile).